Consider the following 187-residue polypeptide: Transmembrane protein 17A (187 aa).

The next 4 helical transmembrane spans lie at 49–69 (IFLY…VIML), 82–102 (FILV…LYLG), 114–134 (LAGF…FLLC), and 146–166 (AVHG…IFAL).

Belongs to the TMEM17 family. Part of the tectonic-like complex (also named B9 complex).

The protein localises to the cell projection. Its subcellular location is the cilium membrane. Functionally, transmembrane component of the tectonic-like complex, a complex localized at the transition zone of primary cilia and acting as a barrier that prevents diffusion of transmembrane proteins between the cilia and plasma membranes. Required for ciliogenesis and sonic hedgehog/SHH signaling. The polypeptide is Transmembrane protein 17A (tmem17-a) (Xenopus tropicalis (Western clawed frog)).